The primary structure comprises 504 residues: Signal transduction histidine-protein kinase/phosphatase MprB (504 aa).

The Cytoplasmic portion of the chain corresponds to 1-26 (MWWFRRRDRAPLRATSSLSLRWRVML). The helical transmembrane segment at 27 to 47 (LAMSMVAMVVVLMSFAVYAVI) threads the bilayer. The Extracellular segment spans residues 48-163 (SAALYSDIDN…PTEAVMNKLR (116 aa)). A helical membrane pass occupies residues 164-184 (WVLLIVGGIGVAVAAVAGGMV). Topologically, residues 185 to 504 (TRAGLRPVGR…SVESQSTRAT (320 aa)) are cytoplasmic. One can recognise an HAMP domain in the interval 186-238 (RAGLRPVGRLTEAAERVARTDDLRPIPVFGSDELARLTEAFNLMLRALAESRE). Positions 246-466 (DAGHELRTPL…SIYVLLPGRR (221 aa)) constitute a Histidine kinase domain. The residue at position 249 (His249) is a Phosphohistidine; by autocatalysis. A disordered region spans residues 471–504 (QLPGATAGARSTDIENSRGSANVISVESQSTRAT). The segment covering 487–504 (SRGSANVISVESQSTRAT) has biased composition (polar residues).

Mg(2+) is required as a cofactor. It depends on Mn(2+) as a cofactor. Autophosphorylated.

It localises to the cell membrane. The enzyme catalyses ATP + protein L-histidine = ADP + protein N-phospho-L-histidine.. Member of the two-component regulatory system MprB/MprA which contributes to maintaining a balance among several systems involved in stress resistance and is required for establishment and maintenance of persistent infection in the host. In response to environmental signals MprB acts both as a membrane-associated protein kinase that undergoes autophosphorylation and subsequently transfers the phosphate to MprA, and a protein phosphatase that dephosphorylates phospho-MprA. The protein is Signal transduction histidine-protein kinase/phosphatase MprB (mprB) of Mycobacterium tuberculosis (strain ATCC 25177 / H37Ra).